The chain runs to 375 residues: 23S rRNA (uracil(747)-C(5))-methyltransferase RlmC (375 aa).

Cys3, Cys11, Cys14, and Cys87 together coordinate [4Fe-4S] cluster. S-adenosyl-L-methionine-binding residues include Gln212, Phe241, Glu262, and Asn307. Catalysis depends on Cys334, which acts as the Nucleophile.

Belongs to the class I-like SAM-binding methyltransferase superfamily. RNA M5U methyltransferase family. RlmC subfamily.

It carries out the reaction uridine(747) in 23S rRNA + S-adenosyl-L-methionine = 5-methyluridine(747) in 23S rRNA + S-adenosyl-L-homocysteine + H(+). Catalyzes the formation of 5-methyl-uridine at position 747 (m5U747) in 23S rRNA. This is 23S rRNA (uracil(747)-C(5))-methyltransferase RlmC from Escherichia coli (strain SMS-3-5 / SECEC).